The following is a 209-amino-acid chain: Uracil phosphoribosyltransferase (209 aa).

5-phospho-alpha-D-ribose 1-diphosphate is bound by residues Arg-79, Arg-104, and 131–139 (DPMLATGGS). Uracil-binding positions include Ile-194 and 199–201 (GDA). Residue Asp-200 participates in 5-phospho-alpha-D-ribose 1-diphosphate binding.

Belongs to the UPRTase family. Mg(2+) serves as cofactor.

The enzyme catalyses UMP + diphosphate = 5-phospho-alpha-D-ribose 1-diphosphate + uracil. It functions in the pathway pyrimidine metabolism; UMP biosynthesis via salvage pathway; UMP from uracil: step 1/1. Allosterically activated by GTP. Its function is as follows. Catalyzes the conversion of uracil and 5-phospho-alpha-D-ribose 1-diphosphate (PRPP) to UMP and diphosphate. The chain is Uracil phosphoribosyltransferase from Lactobacillus gasseri (strain ATCC 33323 / DSM 20243 / BCRC 14619 / CIP 102991 / JCM 1131 / KCTC 3163 / NCIMB 11718 / NCTC 13722 / AM63).